A 406-amino-acid chain; its full sequence is MNKPVAPNSYKTGPDEEGMFGIFGGRFVAETLMPLILELQEAYETAKNDPEFKAELNALSTYYAGRPSKLYYAEGLTKHLGGAKIYFKREDLNHTGSHKINNCLGQILLAKRMGKTRIIAETGAGQHGVASATVAARFGLPCVVYMGATDVERQKPNVFRMKLLGAEVIPVSAGNGTLKDAMNEALRDWVTNVEDTYYLIGTAAGPHPYPELVRDFQSVIGNEARQQILEQEGRLPDVIVAAVGGGSNAIGLFHPFLDDASVKIVGVEAGGRGLDGEEHCASMSAGRPGVLHGNRTYLLQNDDGQILEGHSVSAGLDYPGVGPEHSWLKDSGRVDYVPILDDEALDAFQLCTRTEGIIPALESAHAIAQAVKMAPTMGKDQVMIVNLSGRGDKDVHTVGKLLGMDI.

Lysine 99 carries the N6-(pyridoxal phosphate)lysine modification.

Belongs to the TrpB family. As to quaternary structure, tetramer of two alpha and two beta chains. Pyridoxal 5'-phosphate serves as cofactor.

It carries out the reaction (1S,2R)-1-C-(indol-3-yl)glycerol 3-phosphate + L-serine = D-glyceraldehyde 3-phosphate + L-tryptophan + H2O. It participates in amino-acid biosynthesis; L-tryptophan biosynthesis; L-tryptophan from chorismate: step 5/5. Functionally, the beta subunit is responsible for the synthesis of L-tryptophan from indole and L-serine. The polypeptide is Tryptophan synthase beta chain (Brucella anthropi (strain ATCC 49188 / DSM 6882 / CCUG 24695 / JCM 21032 / LMG 3331 / NBRC 15819 / NCTC 12168 / Alc 37) (Ochrobactrum anthropi)).